We begin with the raw amino-acid sequence, 126 residues long: Fatty acid-binding protein, liver (126 aa).

Ala2 bears the N-acetylalanine mark.

It belongs to the calycin superfamily. Fatty-acid binding protein (FABP) family.

It localises to the cytoplasm. Functionally, binds free fatty acids and their coenzyme A derivatives, bilirubin, and some other small molecules in the cytoplasm. May be involved in intracellular lipid transport. The polypeptide is Fatty acid-binding protein, liver (fabp1) (Schroederichthys bivius (Narrowmouthed catshark)).